A 106-amino-acid chain; its full sequence is Thiosulfate sulfurtransferase GlpE (106 aa).

The Rhodanese domain occupies 17 to 105 (EQSEAKLVDI…WQRAELPIVR (89 aa)). The active-site Cysteine persulfide intermediate is the cysteine 65.

It belongs to the GlpE family.

The protein localises to the cytoplasm. The catalysed reaction is thiosulfate + hydrogen cyanide = thiocyanate + sulfite + 2 H(+). It catalyses the reaction thiosulfate + [thioredoxin]-dithiol = [thioredoxin]-disulfide + hydrogen sulfide + sulfite + 2 H(+). In terms of biological role, transferase that catalyzes the transfer of sulfur from thiosulfate to thiophilic acceptors such as cyanide or dithiols. May function in a CysM-independent thiosulfate assimilation pathway by catalyzing the conversion of thiosulfate to sulfite, which can then be used for L-cysteine biosynthesis. In Vibrio campbellii (strain ATCC BAA-1116), this protein is Thiosulfate sulfurtransferase GlpE.